The primary structure comprises 74 residues: uncharacterized protein (74 aa).

The dksA C4-type zinc finger occupies 35–59 (CEECDAPIPAARRAAYPSATRCVSC).

This is an uncharacterized protein from Enterobacteriaceae (Bacteriophage P2).